A 258-amino-acid chain; its full sequence is Small ribosomal subunit protein uS2 (258 aa).

Residues 226–258 (QGVSNEEVAAEQNIDLDEKEKSEETEATEATEE) are disordered.

This sequence belongs to the universal ribosomal protein uS2 family.

This is Small ribosomal subunit protein uS2 from Staphylococcus aureus (strain COL).